The chain runs to 298 residues: Acetaldehyde dehydrogenase (298 aa).

Residue 6–9 (SGNI) participates in NAD(+) binding. Cys-121 (acyl-thioester intermediate) is an active-site residue. NAD(+) is bound by residues 152 to 160 (SAGPGTRAN) and Asn-271.

This sequence belongs to the acetaldehyde dehydrogenase family.

The enzyme catalyses acetaldehyde + NAD(+) + CoA = acetyl-CoA + NADH + H(+). In Mycobacterium avium (strain 104), this protein is Acetaldehyde dehydrogenase.